A 547-amino-acid chain; its full sequence is Chaperonin GroEL (547 aa).

ATP contacts are provided by residues threonine 30–proline 33, lysine 51, aspartate 87–threonine 91, glycine 415, asparagine 479–alanine 481, and aspartate 495. Residues alanine 524 to phenylalanine 547 form a disordered region. The span at alanine 535–phenylalanine 547 shows a compositional bias: gly residues.

It belongs to the chaperonin (HSP60) family. As to quaternary structure, forms a cylinder of 14 subunits composed of two heptameric rings stacked back-to-back. Interacts with the co-chaperonin GroES.

It localises to the cytoplasm. It carries out the reaction ATP + H2O + a folded polypeptide = ADP + phosphate + an unfolded polypeptide.. Functionally, together with its co-chaperonin GroES, plays an essential role in assisting protein folding. The GroEL-GroES system forms a nano-cage that allows encapsulation of the non-native substrate proteins and provides a physical environment optimized to promote and accelerate protein folding. In Xylella fastidiosa (strain M23), this protein is Chaperonin GroEL.